A 99-amino-acid polypeptide reads, in one-letter code: Teretoxin Tsu6.4 (99 aa).

A signal peptide spans 1-21 (MRLLLILVLLTPVIVAFSVDE). Positions 22 to 53 (ELNNADGANAASFTADQEVRHKRNLFPAIARR) are excised as a propeptide.

Post-translationally, contains 3 disulfide bonds. In terms of tissue distribution, expressed by the venom duct.

Its subcellular location is the secreted. In Terebra subulata (Chocolate spotted auger), this protein is Teretoxin Tsu6.4.